The primary structure comprises 175 residues: VQ motif-containing protein 25 (175 aa).

Residues 50-59 (FRELVQSLTG) carry the VQ motif.

The protein localises to the nucleus. Functionally, may function as negative regulator of plant defense. This Arabidopsis thaliana (Mouse-ear cress) protein is VQ motif-containing protein 25.